A 207-amino-acid chain; its full sequence is dTTP/UTP pyrophosphatase (207 aa).

Catalysis depends on Asp79, which acts as the Proton acceptor.

The protein belongs to the Maf family. YhdE subfamily. A divalent metal cation is required as a cofactor.

The protein localises to the cytoplasm. It carries out the reaction dTTP + H2O = dTMP + diphosphate + H(+). The enzyme catalyses UTP + H2O = UMP + diphosphate + H(+). Its function is as follows. Nucleoside triphosphate pyrophosphatase that hydrolyzes dTTP and UTP. May have a dual role in cell division arrest and in preventing the incorporation of modified nucleotides into cellular nucleic acids. The sequence is that of dTTP/UTP pyrophosphatase from Nitrobacter hamburgensis (strain DSM 10229 / NCIMB 13809 / X14).